The chain runs to 610 residues: UvrABC system protein C (610 aa).

A GIY-YIG domain is found at 16-94 (SQPGVYRMYD…IKLYQPRYNV (79 aa)). Positions 204–239 (QQVLTQLITRMEEASQQLHFEDAARIRDQIQAVRRV) constitute a UVR domain.

It belongs to the UvrC family. Interacts with UvrB in an incision complex.

The protein localises to the cytoplasm. Its function is as follows. The UvrABC repair system catalyzes the recognition and processing of DNA lesions. UvrC both incises the 5' and 3' sides of the lesion. The N-terminal half is responsible for the 3' incision and the C-terminal half is responsible for the 5' incision. The protein is UvrABC system protein C of Yersinia pseudotuberculosis serotype O:1b (strain IP 31758).